The following is a 185-amino-acid chain: Ribosome-recycling factor (185 aa).

It belongs to the RRF family.

The protein resides in the cytoplasm. Its function is as follows. Responsible for the release of ribosomes from messenger RNA at the termination of protein biosynthesis. May increase the efficiency of translation by recycling ribosomes from one round of translation to another. In Baumannia cicadellinicola subsp. Homalodisca coagulata, this protein is Ribosome-recycling factor.